We begin with the raw amino-acid sequence, 157 residues long: MSRRNRAPKRDILPDPKYKSQVVAKFVNHIMLSGKKSIAEKIVYGAFDKIKAKDASANEVEVFEKALESVSPMVEVKSRRVGGATYQVPVEVRPERRQTLGMRWIIDAARKRKENTMGDRLAAEILEAVEGRGAAVKKREDTHKMAEANKAFAHFRW.

It belongs to the universal ribosomal protein uS7 family. Part of the 30S ribosomal subunit. Contacts proteins S9 and S11.

Its function is as follows. One of the primary rRNA binding proteins, it binds directly to 16S rRNA where it nucleates assembly of the head domain of the 30S subunit. Is located at the subunit interface close to the decoding center, probably blocks exit of the E-site tRNA. The protein is Small ribosomal subunit protein uS7 of Francisella tularensis subsp. holarctica (strain OSU18).